Reading from the N-terminus, the 979-residue chain is UPF0182 protein Mb0065 (979 aa).

7 helical membrane-spanning segments follow: residues 19–41 (LVTAGMGMLALLLFGPRLVDIYV), 63–85 (LAIVAAVALVVAGIVLAALLLAY), 114–136 (LFGWGIAVTLGVVCGLIASFDWV), 174–196 (WLFVAVVLAFLASLLTHYLFGGL), 208–230 (AARVQLAVFAGAVVLLKAVAYWL), 261–280 (LVLVAIAVLCAVSFFTAIFL), and 285–307 (IPAMAAALLVLSAILVGGLWPLL). Residues 898–948 (GTGRVATAPGGDAASAPPPGAGGPAPPQAVPPPRTTQPPAAPPRGPDVPPA) form a disordered region. The segment covering 902 to 912 (VATAPGGDAAS) has biased composition (low complexity). Residues 913 to 946 (APPPGAGGPAPPQAVPPPRTTQPPAAPPRGPDVP) are compositionally biased toward pro residues.

It belongs to the UPF0182 family.

The protein localises to the cell membrane. The polypeptide is UPF0182 protein Mb0065 (Mycobacterium bovis (strain ATCC BAA-935 / AF2122/97)).